The sequence spans 117 residues: UPF0102 protein Clos_1471 (117 aa).

Belongs to the UPF0102 family.

The protein is UPF0102 protein Clos_1471 of Alkaliphilus oremlandii (strain OhILAs) (Clostridium oremlandii (strain OhILAs)).